The sequence spans 185 residues: Ribosome-recycling factor (185 aa).

Belongs to the RRF family.

It is found in the cytoplasm. Its function is as follows. Responsible for the release of ribosomes from messenger RNA at the termination of protein biosynthesis. May increase the efficiency of translation by recycling ribosomes from one round of translation to another. This Thioalkalivibrio sulfidiphilus (strain HL-EbGR7) protein is Ribosome-recycling factor.